The primary structure comprises 207 residues: Guanylate kinase (207 aa).

The Guanylate kinase-like domain occupies 4-184 (GTLYIVSAPS…ALADLHTIIR (181 aa)). Residue 11–18 (APSGAGKS) coordinates ATP.

This sequence belongs to the guanylate kinase family.

It is found in the cytoplasm. The enzyme catalyses GMP + ATP = GDP + ADP. Functionally, essential for recycling GMP and indirectly, cGMP. The polypeptide is Guanylate kinase (Photorhabdus laumondii subsp. laumondii (strain DSM 15139 / CIP 105565 / TT01) (Photorhabdus luminescens subsp. laumondii)).